Here is a 758-residue protein sequence, read N- to C-terminus: RNA-directed RNA polymerase catalytic subunit (758 aa).

The segment at Ser-50–Tyr-82 is disordered. Polar residues predominate over residues Trp-55 to Pro-64. 2 short sequence motifs (nuclear localization signal) span residues Arg-187–Ile-195 and Arg-203–Ser-216. Positions Arg-249–Glu-256 are promoter-binding site. Positions Val-286 to Tyr-483 constitute a RdRp catalytic domain.

This sequence belongs to the influenza viruses polymerase PB1 family. As to quaternary structure, influenza RNA polymerase is composed of three subunits: PB1, PB2 and PA. Interacts (via N-terminus) with PA (via C-terminus). Interacts (via C-terminus) with PB2 (via N-terminus); this interaction is essential for transcription initiation. Post-translationally, phosphorylated by host PRKCA.

It is found in the host nucleus. The protein resides in the host cytoplasm. The enzyme catalyses RNA(n) + a ribonucleoside 5'-triphosphate = RNA(n+1) + diphosphate. RNA-dependent RNA polymerase which is responsible for replication and transcription of virus RNA segments. The transcription of viral mRNAs occurs by a unique mechanism called cap-snatching. 5' methylated caps of cellular mRNAs are cleaved after 10-13 nucleotides by PA. In turn, these short capped RNAs are used as primers by PB1 for transcription of viral mRNAs. During virus replication, PB1 initiates RNA synthesis and copy vRNA into complementary RNA (cRNA) which in turn serves as a template for the production of more vRNAs. This Influenza A virus (strain A/Chicken/Scotland/1959 H5N1) protein is RNA-directed RNA polymerase catalytic subunit.